The chain runs to 214 residues: UPF0502 protein Acid345_3645 (214 aa).

The protein belongs to the UPF0502 family.

The protein is UPF0502 protein Acid345_3645 of Koribacter versatilis (strain Ellin345).